The chain runs to 155 residues: Large ribosomal subunit protein uL22 (155 aa).

It belongs to the universal ribosomal protein uL22 family. In terms of assembly, part of the 50S ribosomal subunit. Contacts the macrolide antibiotic tylosin in the polypeptide exit tunnel.

This protein binds specifically to 23S rRNA. It makes multiple contacts with different domains of the 23S rRNA in the assembled 50S subunit and ribosome. In terms of biological role, contacts all 6 domains of the 23S rRNA, helping stabilize their relative orientation. An extended beta-hairpin in the C-terminus forms part of the polypeptide exit tunnel, in which it helps forms a bend with protein L4, while most of the rest of the protein is located at the polypeptide exit tunnel on the outside of the subunit. This chain is Large ribosomal subunit protein uL22, found in Haloarcula marismortui (strain ATCC 43049 / DSM 3752 / JCM 8966 / VKM B-1809) (Halobacterium marismortui).